A 250-amino-acid chain; its full sequence is Ribonuclease HII (250 aa).

In terms of domain architecture, RNase H type-2 spans Q66 to K250. D72, E73, and D164 together coordinate a divalent metal cation.

The protein belongs to the RNase HII family. The cofactor is Mn(2+). Mg(2+) is required as a cofactor.

The protein resides in the cytoplasm. It catalyses the reaction Endonucleolytic cleavage to 5'-phosphomonoester.. Its function is as follows. Endonuclease that specifically degrades the RNA of RNA-DNA hybrids. In Lactobacillus acidophilus (strain ATCC 700396 / NCK56 / N2 / NCFM), this protein is Ribonuclease HII.